The following is a 317-amino-acid chain: Melanocyte-stimulating hormone receptor (317 aa).

Topologically, residues 1–37 (MPVLGSQRRLLGSLNCTPPATFPLTLAPNRTGPQCLE) are extracellular. An N-linked (GlcNAc...) asparagine glycan is attached at Asn-29. The chain crosses the membrane as a helical span at residues 38–63 (VAIPDGLFLSLGLVSLVENVLVVAAI). Residues 64–72 (AKNRNLQSP) are Cytoplasmic-facing. A helical membrane pass occupies residues 73 to 93 (MYYFICCLAMSDLLVSVSNVL). The Extracellular segment spans residues 94–118 (ETAVMLLLEAGALAARAAVVQQLDN). The helical transmembrane segment at 119-140 (VIDVLICGSMVSSLCFLGAIAV) threads the bilayer. Residues 141 to 163 (DRYISIFYALRYHSVVTLPRAWR) are Cytoplasmic-facing. Residues 164–183 (IIAAIWVASILTSLLFITYY) form a helical membrane-spanning segment. The Extracellular segment spans residues 184 to 191 (NHTVVLLC). Residues 192–211 (LVGFFIAMLALMAVLYVHML) form a helical membrane-spanning segment. Topologically, residues 212–240 (ARACQHARGIARLQKRQRPIHQGFGLKGA) are cytoplasmic. Residues 241-266 (ATLTILLGVFFLCWGPFFLHLSLIVL) traverse the membrane as a helical segment. Over 267-279 (CPQHPTCGCIFKN) the chain is Extracellular. Residues 280–300 (FNLFLALIICNAIVDPLIYAF) form a helical membrane-spanning segment. Over 301 to 317 (RSQELRKTLQEVLQCSW) the chain is Cytoplasmic. Cys-315 carries the S-palmitoyl cysteine lipid modification.

This sequence belongs to the G-protein coupled receptor 1 family. As to quaternary structure, interacts with MGRN1, but does not undergo MGRN1-mediated ubiquitination; this interaction competes with GNAS-binding and thus inhibits agonist-induced cAMP production. Interacts with OPN3; the interaction results in a decrease in MC1R-mediated cAMP signaling and ultimately a decrease in melanin production in melanocytes.

Its subcellular location is the cell membrane. Functionally, receptor for MSH (alpha, beta and gamma) and ACTH. The activity of this receptor is mediated by G proteins which activate adenylate cyclase. Mediates melanogenesis, the production of eumelanin (black/brown) and phaeomelanin (red/yellow), via regulation of cAMP signaling in melanocytes. This is Melanocyte-stimulating hormone receptor (MC1R) from Cervus elaphus (Red deer).